The sequence spans 521 residues: MIKQALISVSDKTGIVDFAKSLSDLGVKLLSTGGTAKLLADAGLPVTEVADYTGFPEMLDGRVKTLHPKVHGGILARRDLPEHMQALEQHGIPTIDLLVVNLYPFVATIAKDDCTLADAIENIDIGGPTMLRSAAKNHRDVTVVVDPADYAVVLDEMKANGNTVGYPTNFRLATKVFAHTAQYDGAITNYLTSLTDELKHASRSTYPATLNLAFDKVQDLRYGENPHQSAAFYRDLATPAGALANYRQLQGKELSYNNIADSDAAWECVKTFDAPACVIIKHANPCGVAVGNDSADAYAKAFQTDPTSAFGGIIAFNREVDEAAAQAVAKQFVEVLIAPSFSDAAKQVFAAKQNVRLLEIALGDGHNAFDLKRVGGGLLVQSLDSRNVQPSELRVVTKRQPTAKEMDDLLFAWRVAKYVKSNAIVFCGNGMTLGVGAGQMSRVDSARIASIKAQNAGLTLAGSAVASDAFFPFRDGLDVVVAAGATCVIQPGGSMRDDEVIAAADEHGIAMVLTGVRHFRH.

Positions 1–145 (MIKQALISVS…KNHRDVTVVV (145 aa)) constitute an MGS-like domain.

This sequence belongs to the PurH family.

The enzyme catalyses (6R)-10-formyltetrahydrofolate + 5-amino-1-(5-phospho-beta-D-ribosyl)imidazole-4-carboxamide = 5-formamido-1-(5-phospho-D-ribosyl)imidazole-4-carboxamide + (6S)-5,6,7,8-tetrahydrofolate. It carries out the reaction IMP + H2O = 5-formamido-1-(5-phospho-D-ribosyl)imidazole-4-carboxamide. The protein operates within purine metabolism; IMP biosynthesis via de novo pathway; 5-formamido-1-(5-phospho-D-ribosyl)imidazole-4-carboxamide from 5-amino-1-(5-phospho-D-ribosyl)imidazole-4-carboxamide (10-formyl THF route): step 1/1. It participates in purine metabolism; IMP biosynthesis via de novo pathway; IMP from 5-formamido-1-(5-phospho-D-ribosyl)imidazole-4-carboxamide: step 1/1. This is Bifunctional purine biosynthesis protein PurH from Burkholderia cenocepacia (strain HI2424).